A 149-amino-acid chain; its full sequence is Deoxyuridine 5'-triphosphate nucleotidohydrolase (149 aa).

Residues 68 to 70 (RSG), N81, 85 to 87 (LID), and M95 each bind substrate.

Belongs to the dUTPase family. Mg(2+) serves as cofactor.

The enzyme catalyses dUTP + H2O = dUMP + diphosphate + H(+). Its pathway is pyrimidine metabolism; dUMP biosynthesis; dUMP from dCTP (dUTP route): step 2/2. Functionally, this enzyme is involved in nucleotide metabolism: it produces dUMP, the immediate precursor of thymidine nucleotides and it decreases the intracellular concentration of dUTP so that uracil cannot be incorporated into DNA. The protein is Deoxyuridine 5'-triphosphate nucleotidohydrolase of Bordetella avium (strain 197N).